The chain runs to 596 residues: Isocitrate dehydrogenase kinase/phosphatase (596 aa).

ATP is bound by residues 316 to 322 and Lys337; that span reads APGIRGM. Residue Asp372 is part of the active site.

This sequence belongs to the AceK family.

It is found in the cytoplasm. It catalyses the reaction L-seryl-[isocitrate dehydrogenase] + ATP = O-phospho-L-seryl-[isocitrate dehydrogenase] + ADP + H(+). Functionally, bifunctional enzyme which can phosphorylate or dephosphorylate isocitrate dehydrogenase (IDH) on a specific serine residue. This is a regulatory mechanism which enables bacteria to bypass the Krebs cycle via the glyoxylate shunt in response to the source of carbon. When bacteria are grown on glucose, IDH is fully active and unphosphorylated, but when grown on acetate or ethanol, the activity of IDH declines drastically concomitant with its phosphorylation. The chain is Isocitrate dehydrogenase kinase/phosphatase from Cronobacter sakazakii (strain ATCC BAA-894) (Enterobacter sakazakii).